The sequence spans 206 residues: Large ribosomal subunit protein uL4 (206 aa).

This sequence belongs to the universal ribosomal protein uL4 family. As to quaternary structure, part of the 50S ribosomal subunit.

In terms of biological role, one of the primary rRNA binding proteins, this protein initially binds near the 5'-end of the 23S rRNA. It is important during the early stages of 50S assembly. It makes multiple contacts with different domains of the 23S rRNA in the assembled 50S subunit and ribosome. Its function is as follows. Forms part of the polypeptide exit tunnel. The chain is Large ribosomal subunit protein uL4 from Rhodopseudomonas palustris (strain HaA2).